The primary structure comprises 448 residues: Probable D-serine dehydratase (448 aa).

An N6-(pyridoxal phosphate)lysine modification is found at K119.

This sequence belongs to the serine/threonine dehydratase family. DsdA subfamily. Requires pyridoxal 5'-phosphate as cofactor.

It catalyses the reaction D-serine = pyruvate + NH4(+). The polypeptide is Probable D-serine dehydratase (Pseudomonas aeruginosa (strain ATCC 15692 / DSM 22644 / CIP 104116 / JCM 14847 / LMG 12228 / 1C / PRS 101 / PAO1)).